Reading from the N-terminus, the 62-residue chain is MEKKFLDAIQQLTKELEMLKKDIDSIKEATVRIDKDLLEYREEISKVKQDDSVLIMQQHKDN.

A coiled-coil region spans residues 1 to 32 (MEKKFLDAIQQLTKELEMLKKDIDSIKEATVR).

In Bacillus subtilis (strain 168), this protein is SPbeta prophage-derived uncharacterized protein YonU (yonU).